The primary structure comprises 90 residues: Small ribosomal subunit protein bS16 (90 aa).

Belongs to the bacterial ribosomal protein bS16 family.

The sequence is that of Small ribosomal subunit protein bS16 from Lactiplantibacillus plantarum (strain ATCC BAA-793 / NCIMB 8826 / WCFS1) (Lactobacillus plantarum).